A 235-amino-acid chain; its full sequence is Transcriptional regulatory protein MalR (235 aa).

The region spanning 3 to 119 (NVLIVEDDPM…RFQTALSDYR (117 aa)) is the Response regulatory domain. The residue at position 54 (D54) is a 4-aspartylphosphate. A DNA-binding region (H-T-H motif) is located at residues 178-197 (TEDLAKHTEISQVSIRKYLK).

In terms of processing, phosphorylated and activated by MalK.

The protein localises to the cytoplasm. Its function is as follows. Member of a two-component regulatory system MalK/MalR. Activates transcription of maeA, maeN and yflS in presence of malate by binding to their promoter region. The sequence is that of Transcriptional regulatory protein MalR (malR) from Bacillus subtilis (strain 168).